Here is a 267-residue protein sequence, read N- to C-terminus: Kit ligand (267 aa).

The signal sequence occupies residues 1–25 (MKKTQTWIITCIYLQLLLFNPLVHT). Position 26 is a pyrrolidone carboxylic acid (Gln-26). Topologically, residues 26 to 215 (QGICRNRVTD…SNSIEDSSLQ (190 aa)) are extracellular. 2 disulfides stabilise this stretch: Cys-29–Cys-114 and Cys-68–Cys-164. Asn-90, Asn-97, Asn-145, and Asn-196 each carry an N-linked (GlcNAc...) asparagine glycan. A helical transmembrane segment spans residues 216–238 (WAAVALPAFFSLVIGFAFGALYW). The Cytoplasmic portion of the chain corresponds to 239–267 (KKKQPNLTRTVENRQINEEDNEISMLQEK).

Belongs to the SCF family. As to quaternary structure, homodimer, non-covalently linked. Heterotetramer with KIT, binding two KIT molecules; thereby mediates KIT dimerization and subsequent activation by autophosphorylation. In terms of processing, a soluble form is produced by proteolytic processing of the extracellular domain.

It localises to the cytoplasm. It is found in the cytoskeleton. The protein localises to the cell membrane. Its subcellular location is the cell projection. The protein resides in the lamellipodium. It localises to the filopodium. It is found in the secreted. Ligand for the receptor-type protein-tyrosine kinase KIT. Plays an essential role in the regulation of cell survival and proliferation, hematopoiesis, stem cell maintenance, gametogenesis, mast cell development, migration and function, and in melanogenesis. KITLG/SCF binding can activate several signaling pathways. Promotes phosphorylation of PIK3R1, the regulatory subunit of phosphatidylinositol 3-kinase, and subsequent activation of the kinase AKT1. KITLG/SCF and KIT also transmit signals via GRB2 and activation of RAS, RAF1 and the MAP kinases MAPK1/ERK2 and/or MAPK3/ERK1. KITLG/SCF and KIT promote activation of STAT family members STAT1, STAT3 and STAT5. KITLG/SCF and KIT promote activation of PLCG1, leading to the production of the cellular signaling molecules diacylglycerol and inositol 1,4,5-trisphosphate. KITLG/SCF acts synergistically with other cytokines, probably interleukins. The protein is Kit ligand (KITLG) of Ovis aries (Sheep).